Here is a 446-residue protein sequence, read N- to C-terminus: Regulator of drug sensitivity 2 (446 aa).

A DNA-binding region (zn(2)-C6 fungal-type) is located at residues 15-45; that stretch reads KTCLFCKRSHVVCDKQRPCSRCVKRDIAHLC. Disordered regions lie at residues 52–106 and 158–218; these read VPNE…PKLD and ASNV…KEES. Composition is skewed to polar residues over residues 56 to 70 and 84 to 96; these read MPSQ…NNIQ and DYQN…SGST. A Phosphoserine modification is found at S102. Over residues 160–177 the composition is skewed to polar residues; that stretch reads NVHLENGSQTTQSPLEYQ. Residues 178–192 are compositionally biased toward basic and acidic residues; the sequence is NDNRRDEIGVARQEN. A compositionally biased stretch (polar residues) spans 193–206; the sequence is RSPTIMSGSSNSIS. A compositionally biased stretch (basic and acidic residues) spans 207–218; sequence KGDKQDQEKEES. A Phosphothreonine modification is found at T231.

In terms of processing, phosphorylated by SNF1 in absence of glucose. The phosphorylation is required for induction of transcription of gluconeogenic genes.

The protein resides in the cytoplasm. Its subcellular location is the nucleus. In terms of biological role, transcription factor which regulates the expression of genes for gluconeogenesis, the TCA cycle, and glucose metabolism. Involved in the cell wall remodeling process and drug resistance. The polypeptide is Regulator of drug sensitivity 2 (RDS2) (Saccharomyces cerevisiae (strain ATCC 204508 / S288c) (Baker's yeast)).